The following is a 579-amino-acid chain: Acyl-coenzyme A synthetase ACSM5, mitochondrial (579 aa).

Residues 1-26 constitute a mitochondrion transit peptide; the sequence is MRPWLRHLVLQALRNSRAFCGSHGKP. N6-acetyllysine; alternate is present on Lys-97. Position 97 is an N6-succinyllysine; alternate (Lys-97). An N6-acetyllysine modification is found at Lys-152. Position 230–238 (230–238) interacts with ATP; the sequence is TSGTTGAPK. Lys-303 is subject to N6-acetyllysine; alternate. The residue at position 303 (Lys-303) is an N6-succinyllysine; alternate. ATP contacts are provided by residues 368-373, Asp-455, Arg-470, and Lys-566; that span reads EGYGQS.

It belongs to the ATP-dependent AMP-binding enzyme family. It depends on Mg(2+) as a cofactor. Mn(2+) is required as a cofactor. As to expression, detected in kidney and liver.

It is found in the mitochondrion matrix. The catalysed reaction is a medium-chain fatty acid + ATP + CoA = a medium-chain fatty acyl-CoA + AMP + diphosphate. Catalyzes the activation of fatty acids by CoA to produce an acyl-CoA, the first step in fatty acid metabolism. This is Acyl-coenzyme A synthetase ACSM5, mitochondrial (ACSM5) from Homo sapiens (Human).